The primary structure comprises 580 residues: Arginine--tRNA ligase (580 aa).

The 'HIGH' region motif lies at 131–141; that stretch reads ANPTGPLHVGH.

This sequence belongs to the class-I aminoacyl-tRNA synthetase family. As to quaternary structure, monomer.

The protein resides in the cytoplasm. It carries out the reaction tRNA(Arg) + L-arginine + ATP = L-arginyl-tRNA(Arg) + AMP + diphosphate. This is Arginine--tRNA ligase from Ruegeria sp. (strain TM1040) (Silicibacter sp.).